A 546-amino-acid chain; its full sequence is (+)-epi-alpha-bisabolol synthase (546 aa).

Asp297, Asp301, Asp441, Thr445, and Glu449 together coordinate Mg(2+). The DDXXD motif signature appears at Asp297–Asp301.

The protein belongs to the terpene synthase family. Mg(2+) is required as a cofactor.

The enzyme catalyses (2E,6E)-farnesyl diphosphate + H2O = (+)-epi-alpha-bisabolol + diphosphate. It functions in the pathway secondary metabolite biosynthesis; terpenoid biosynthesis. Sesquiterpene synthase involved in the biosynthesis of (+)-epi-alpha-bisabolol, a precursor of the natural sweetner hernandulcin. This chain is (+)-epi-alpha-bisabolol synthase, found in Phyla dulcis (Aztec sweet herb).